The chain runs to 434 residues: Probable transcription factor HMS1 (434 aa).

Positions 266–341 (TGRVSHNIIE…TKSIEYICHL (76 aa)) constitute a bHLH domain. The segment at 365–434 (HLTEPSQPLS…DMDFNNAGDF (70 aa)) is disordered. 2 stretches are compositionally biased toward polar residues: residues 368-382 (EPSQ…SEQV) and 402-423 (PLHN…TNNS).

In terms of assembly, interacts with the G1/S-specific cyclin PCL1. Phosphorylated by the cyclin-CDK complex PCL1-PHO85.

It localises to the nucleus. Involved in exit from mitosis and pseudohyphal differentiation. The sequence is that of Probable transcription factor HMS1 (HMS1) from Saccharomyces cerevisiae (strain ATCC 204508 / S288c) (Baker's yeast).